A 620-amino-acid chain; its full sequence is 1-deoxy-D-xylulose-5-phosphate synthase (620 aa).

Residues His80 and 121-123 each bind thiamine diphosphate; that span reads GHS. Asp152 serves as a coordination point for Mg(2+). Thiamine diphosphate contacts are provided by residues 153–154, Asn181, Tyr288, and Glu370; that span reads GA. A Mg(2+)-binding site is contributed by Asn181.

It belongs to the transketolase family. DXPS subfamily. As to quaternary structure, homodimer. The cofactor is Mg(2+). Thiamine diphosphate is required as a cofactor.

The enzyme catalyses D-glyceraldehyde 3-phosphate + pyruvate + H(+) = 1-deoxy-D-xylulose 5-phosphate + CO2. Its pathway is metabolic intermediate biosynthesis; 1-deoxy-D-xylulose 5-phosphate biosynthesis; 1-deoxy-D-xylulose 5-phosphate from D-glyceraldehyde 3-phosphate and pyruvate: step 1/1. Functionally, catalyzes the acyloin condensation reaction between C atoms 2 and 3 of pyruvate and glyceraldehyde 3-phosphate to yield 1-deoxy-D-xylulose-5-phosphate (DXP). This Salmonella arizonae (strain ATCC BAA-731 / CDC346-86 / RSK2980) protein is 1-deoxy-D-xylulose-5-phosphate synthase.